Here is a 212-residue protein sequence, read N- to C-terminus: Thymidylate kinase (212 aa).

10–17 (GLEGAGKT) provides a ligand contact to ATP.

This sequence belongs to the thymidylate kinase family.

The catalysed reaction is dTMP + ATP = dTDP + ADP. Functionally, phosphorylation of dTMP to form dTDP in both de novo and salvage pathways of dTTP synthesis. The chain is Thymidylate kinase from Yersinia pestis bv. Antiqua (strain Antiqua).